The primary structure comprises 471 residues: UDP-N-acetylmuramoylalanine--D-glutamate ligase (471 aa).

123-129 (GTNGKST) contributes to the ATP binding site.

It belongs to the MurCDEF family.

The protein localises to the cytoplasm. It catalyses the reaction UDP-N-acetyl-alpha-D-muramoyl-L-alanine + D-glutamate + ATP = UDP-N-acetyl-alpha-D-muramoyl-L-alanyl-D-glutamate + ADP + phosphate + H(+). It participates in cell wall biogenesis; peptidoglycan biosynthesis. In terms of biological role, cell wall formation. Catalyzes the addition of glutamate to the nucleotide precursor UDP-N-acetylmuramoyl-L-alanine (UMA). This chain is UDP-N-acetylmuramoylalanine--D-glutamate ligase, found in Caulobacter vibrioides (strain ATCC 19089 / CIP 103742 / CB 15) (Caulobacter crescentus).